A 360-amino-acid chain; its full sequence is uncharacterized protein (360 aa).

The 232-residue stretch at L4–I235 folds into the ABC transporter domain. Position 37–44 (G37–S44) interacts with ATP.

Belongs to the ABC transporter superfamily.

This is an uncharacterized protein from Escherichia coli O6:K15:H31 (strain 536 / UPEC).